We begin with the raw amino-acid sequence, 126 residues long: Large ribosomal subunit protein bL12 (126 aa).

This sequence belongs to the bacterial ribosomal protein bL12 family. As to quaternary structure, homodimer. Part of the ribosomal stalk of the 50S ribosomal subunit. Forms a multimeric L10(L12)X complex, where L10 forms an elongated spine to which 2 to 4 L12 dimers bind in a sequential fashion. Binds GTP-bound translation factors.

Its function is as follows. Forms part of the ribosomal stalk which helps the ribosome interact with GTP-bound translation factors. Is thus essential for accurate translation. This is Large ribosomal subunit protein bL12 from Desulfatibacillum aliphaticivorans.